A 79-amino-acid chain; its full sequence is Sec-independent protein translocase protein TatA (79 aa).

A helical transmembrane segment spans residues 1 to 21; it reads MGGFTSIWHWVIVLLVIVLLF. The interval 48–79 is disordered; the sequence is EEEAKNEPKTLDAQVAQTKVHETSEIKSKQES. Over residues 66–79 the composition is skewed to basic and acidic residues; the sequence is KVHETSEIKSKQES.

This sequence belongs to the TatA/E family. In terms of assembly, the Tat system comprises two distinct complexes: a TatABC complex, containing multiple copies of TatA, TatB and TatC subunits, and a separate TatA complex, containing only TatA subunits. Substrates initially bind to the TatABC complex, which probably triggers association of the separate TatA complex to form the active translocon.

Its subcellular location is the cell inner membrane. In terms of biological role, part of the twin-arginine translocation (Tat) system that transports large folded proteins containing a characteristic twin-arginine motif in their signal peptide across membranes. TatA could form the protein-conducting channel of the Tat system. The protein is Sec-independent protein translocase protein TatA of Helicobacter pylori (strain Shi470).